Reading from the N-terminus, the 209-residue chain is Dof zinc finger protein DOF1.6 (209 aa).

A compositionally biased stretch (polar residues) spans 1 to 17 (MPSEPNQTRPTRVQPST). Residues 1–29 (MPSEPNQTRPTRVQPSTAAYPPPNLAEPL) form a disordered region. Pro residues predominate over residues 20-29 (YPPPNLAEPL). The segment at 29-83 (LPCPRCNSTTTKFCYYNNYNLAQPRYYCKSCRRYWTQGGTLRDVPVGGGTRRSSS) adopts a Dof-type zinc-finger fold. 4 residues coordinate Zn(2+): cysteine 31, cysteine 34, cysteine 56, and cysteine 59. The disordered stretch occupies residues 70 to 116 (RDVPVGGGTRRSSSKRHRSFSTTATSSSSSSSVITTTTQEPATTEAS). Residues 89 to 116 (FSTTATSSSSSSSVITTTTQEPATTEAS) are compositionally biased toward low complexity.

It localises to the nucleus. Its function is as follows. Transcription factor that binds specifically to a 5'-AA[AG]G-3' consensus core sequence. This Arabidopsis thaliana (Mouse-ear cress) protein is Dof zinc finger protein DOF1.6 (DOF1.6).